Consider the following 147-residue polypeptide: Interleukin-4 (147 aa).

A signal peptide spans 1–24; the sequence is MGLPAQLPVTLLCLLAGTAHFIQG. Cysteine 48 and cysteine 88 form a disulfide bridge. N-linked (GlcNAc...) asparagine glycosylation is present at asparagine 62.

The protein belongs to the IL-4/IL-13 family.

The protein resides in the secreted. Its function is as follows. Participates in at least several B-cell activation processes as well as of other cell types. It is a costimulator of DNA-synthesis. It induces the expression of class II MHC molecules on resting B-cells. It enhances both secretion and cell surface expression of IgE and IgG1. It also regulates the expression of the low affinity Fc receptor for IgE (CD23) on both lymphocytes and monocytes. Positively regulates IL31RA expression in macrophages. Stimulates autophagy in dendritic cells by interfering with mTORC1 signaling and through the induction of RUFY4. The sequence is that of Interleukin-4 (IL4) from Oryctolagus cuniculus (Rabbit).